The sequence spans 527 residues: Rhamnogalacturonate lyase A (527 aa).

The signal sequence occupies residues 1-20 (MLSKTFLLSSAVLWARVANA). N-linked (GlcNAc...) asparagine glycans are attached at residues Asn-27 and Asn-46. Cystine bridges form between Cys-50–Cys-93 and Cys-184–Cys-193. The N-linked (GlcNAc...) asparagine glycan is linked to Asn-351.

This sequence belongs to the polysaccharide lyase 4 family.

The protein localises to the secreted. It carries out the reaction Endotype eliminative cleavage of L-alpha-rhamnopyranosyl-(1-&gt;4)-alpha-D-galactopyranosyluronic acid bonds of rhamnogalacturonan I domains in ramified hairy regions of pectin leaving L-rhamnopyranose at the reducing end and 4-deoxy-4,5-unsaturated D-galactopyranosyluronic acid at the non-reducing end.. Pectinolytic enzymes consist of four classes of enzymes: pectin lyase, polygalacturonase, pectin methylesterase and rhamnogalacturonase. Degrades the rhamnogalacturonan I (RG-I) backbone of pectin. Active against linseed rhamnogalacturonan. The sequence is that of Rhamnogalacturonate lyase A (rglA) from Emericella nidulans (strain FGSC A4 / ATCC 38163 / CBS 112.46 / NRRL 194 / M139) (Aspergillus nidulans).